The primary structure comprises 389 residues: Chalcone synthase 1 (389 aa).

Cysteine 164 is a catalytic residue.

It belongs to the thiolase-like superfamily. Chalcone/stilbene synthases family.

It catalyses the reaction (E)-4-coumaroyl-CoA + 3 malonyl-CoA + 3 H(+) = 2',4,4',6'-tetrahydroxychalcone + 3 CO2 + 4 CoA. Its pathway is secondary metabolite biosynthesis; flavonoid biosynthesis. Functionally, the primary product of this enzyme is 4,2',4',6'-tetrahydroxychalcone (also termed naringenin-chalcone or chalcone) which can under specific conditions spontaneously isomerize into naringenin. The polypeptide is Chalcone synthase 1 (CHS1) (Cicer arietinum (Chickpea)).